A 296-amino-acid chain; its full sequence is tRNA dimethylallyltransferase (296 aa).

8–15 (GPTGSGKT) serves as a coordination point for ATP. Position 10–15 (10–15 (TGSGKT)) interacts with substrate. Positions 32 to 35 (DSRQ) are interaction with substrate tRNA.

It belongs to the IPP transferase family. Monomer. Mg(2+) serves as cofactor.

The catalysed reaction is adenosine(37) in tRNA + dimethylallyl diphosphate = N(6)-dimethylallyladenosine(37) in tRNA + diphosphate. Functionally, catalyzes the transfer of a dimethylallyl group onto the adenine at position 37 in tRNAs that read codons beginning with uridine, leading to the formation of N6-(dimethylallyl)adenosine (i(6)A). This Leptospira biflexa serovar Patoc (strain Patoc 1 / Ames) protein is tRNA dimethylallyltransferase.